A 5209-amino-acid chain; its full sequence is MKCPKCSHEALEKAPKFCSECGHKLQSQSYETTQGTPHDKSQTPSIVPQITNAEMDETGSESKSLEIQNANVSPKRPNENTSPNPKKKKRKKRKKEKKKKSGVSEGPSSLTSDLSDISLTDKEKKMDTDQSSDSDCSSCIVEDTPTPAEPSSHLSPPENETAGPAQLSASALTTGSSKDGEESIGTTQKPVSASASKAPLGVDQQTKEEKVKCKDEGQKSLSAKAQHTPNANVDQNANVQSDANIDKDSQNVEPQKSSSVKTKPSKSTVADPKKTESEKQKSGERDNENSTQPVSSPKLKRNQTEESQKMVFGPNSAPKKNRGSSADSAMKVEKKPAGGKKDSSADQKSKESEDTESQCVTLPKRNTRSTQHISSSDRLTIYFHAVLSKDFKFNPEEDLIFIRAGGPIGNWEENLVELSVSRDLKEHGFLVEGKFICRKIDAEAVSIPYKYVVYKQKKNKYDYEYIYKLDAEVPTNRCLFIKSHLLNDEGEWHQYDDIICAQPAKNMFEWVKKTIWSDEKKNVLQGRKIAGTIMLETIFDLLRSWSKINLNNFFSQLRQFYEIYRNPFVFEKKQTKWYQLDYDEKDVRELLKNFMLMHVTPELQKDSNEKSKFIQEPLKAGLIMLYVWKQYDLKLDYGTLSRLCTAVCLPNLPKDEFLSLWTDITESFSVINSFSDMVEALISKLKAENMPRWIIVIPLLHLLKGTSKPFEQVITKVNSKYEQSWAGLQGLRSNILSPGPQERRAMLNLMKTYGHLVEVDRLLIRSWMYLMPLDDLVECGSIFPVELLDILQLFTMKCPNNISFTSSESTAEALAHIQSQLLQHRYSCPDVDYGIQCIQAACKLLEKICSLVRYFGHSQNFTDIPVACMNLVASVSGFAQTKQEADTFAEKTLVLLNDTKQTVRAWMRQTFKGRLLNSHLFSSHLTGTSFSTETEVWNNIIAIDFVCKDFIKEWRDTFTTDFEGKYQQEDHLDQIEAYCSNIEKLKVSQPYLVNSVEKCALQAVSTICQTKSEWKLFARFNKFRINWRFGNLVSTIILKSWPKDDKGTYFEEEEAVLKHLLGWAAAKNIFQLHGADEKLIDQLSDEAKEKFAMATSLFTNVLNQLVTGKIKMKLLNHILEKKSVFLELLTLDCFSEEEQYKDIDAMKALIQTRQEEVKAIYHERALAGALIAMCHNVEEHVKVDYKYLEDLYSNDMNEMDLDLFMDVHELNQIPTEASLEVPYFELQDDVRSMAEILNIFKDSYIFKLRWGNEAALFVERAEDEELDELDELPITLDVLNEEIFLPCHAAYRNIYTSLKDGSIDFEDIDEIFRAYKGKYEKLAAEVAIMSKQDFNDDQHWVQTRIQQIKQYHELHLAVESAKVVMMVKETLCLQGDFQVLEKLLITTHSDFKSERLDSIDNELIQAKNVLVDITEPRRLCLQELGHRKNFVIWVKEALEDINELKVFVDLASISAGENDLDVDRVACFHDAVLGYSSMLYDLKPDAGFSLFNEMLKKLWKALDNDSNLPKKLCDSARHIEWLKTVKDSHGSVELSSLSLASAINSKGIYVINAQNQKKLALENILKLHIMEEHDGGCETRVYSLEDLRDLQNKLMLMSGKGEQGQCEVDQFAEVFASVQRLVSAFIDLYVAGNPLFRHWEANINCNSKEACIIIDFNLGSVVSVVMVEGDVTEQLPEVCKKMESCLRFWQDFMDKQRSQHYYLNYYTAEQLVYLCHQLAHNNMEEIDDQVLMMLSFIKPSCSTSDLRKAWHILQYDLIRKGPDQNDDLDFQTFVEVSSMTENESTEKSCPTSDDLIQQLGDASGSTKLGVIWNNYMRDMKAFLPDSLDVPSLGYLLEILANSHREDEGDMSQRDKTRTILRELPNGIASGRPNLIICPSEEILISCISIYMNSKNEPLPTYDEVLLCSATTPYEEVELFLRRCLSAGYRGKKIYTMLYVNQLNYEVSYKVEKFFQNQNAHTTNDYRLVLICESNKEHAYLPSAFSQFRLHLIPQQPIPSIQQYLHRHFAVPVGISSAAAVFKDRQNVGVVSSERSGVGKSLYIKRLYEKLKLNSKKPSQLKCIRLTEPKVDENVIIQSLISVLKKNDLSVYHFDVTTMVKKGLHEFLFRLLILGYLMDSKGNMWKSSNKHLYVIEILRPGLSQNDRRAGAKVSFNFLDVFPIVYCRSPKEVLELEMRMEEHPSFGLSDDPLMDDQEFRSEAYQRPYQYLQRFYNGINLDEFLYQGVEGSHVECLQMLFEYCGIIDPSWAELRNFAWFLNLQLQDCEKSVFCDFSFVGDTLLGFKNFVVEFMILMAKDFATPSLSISDQSPGRLHEDFSSANEEDLAPFKIRKRWESEPHPYIFFNDDHDSMTFIGFHLQPNAQKGVDAVDPSNNRVIKQNIMTMELYEGLKLQRVPFNIDFDQLPRWEKIERLSRVLGIQWPLDPDETYELTTDNMLKMLAVHMRFRCGIPVIIMGETGCGKTRLIKFLCEMHRSGVATDNMKLVKVHGGTSSEMIYTKVREAEAMALRNKLDYGFDTVLFFDEANTTEAISSIKEILCDNSAEGQNLTENTGLKIIAACNPYRKHTDVMIKRLESAGLGYRVRAEETDEKLGSIPLRQLVYRVQALPPSMIPLIWDFGQLNDHTEKMYIKQIVERVAETHSIDSGYITVITDVLSASQKYMRTRQDECSFVSLRDVERCMQVFGWFYKKHLMLLSELDKFESIQRTEKTDQHPKDTDERNPILWSLLMAVGVCYHACLEDKEKYRKKICKYFPAAYSPMKVMQEISVIQDIFLEGVPMGENIARNNALKENVFMMVICIELRIPLFLVGKPGSSKSLSKTLVADGMQGQAAHSDLFRKLKQIHLVSFQCSPHSTPEGIINTFKQCARFQEGKNLSEYVSVVVLDEIGLAEDSQKMPLKTLHPLLEEGCIDDQPSPHKKVGFIGISNWALDPAKMNRGIFVSRGDPDENELIESAKGICSSDVMILEKVRECFKPFAHAYLRICKKQEKGFFGLRDYYSLIKMMFAVAKACDQKPSAEQIVKAVLRNFSGKDDVDAVTFFTSRLNIKPELETISAIELVRENVTAIGQDEECRYLLVLTKNYAALRILQQTFFSDQCQPEIIFGSSFPKDQEYTQICRNINRVKICMETGQTIVLLNLQNLYESLYDALNQYYVTLGGQKYVDLGLGTHRVKCRVHKDFRLIVIEEKDIVYKQFPIPLINRLEKHYLDLNTLLKSEQKDIVKNLEQWVQCFTDVKNKHSVAPSARRYSPADAFIGYHTDTCASVVMQVTEQLKGQELSDPRKGILDESKLILLNCATPDAVVRLDCTSLFNVESEHLSRVYFEDQMHNSLAEFILSHIQQEGCSGAFFTEVTTFSRLLTASETQQLQNVVQNIELLSLQQFDTEQSFLKKIKNYLENTTGDKILLIQTDFDEGFQKLNVIASAKYSSINEINKFKKEGSGKIFVYFITKLPRMDGGTSYIGFNGGPWKSIHIDDLRRPKDIVSDIKALQGLTISQLFEEKAEKVDETEAMEVEDMYAGGEDEEDEEKMELEENNGCKDVLDTTALVRSCVQSAVGMLRDQTEGGMRSTKRVEILLMLLAEDQTLQAEFLKTLKTRLHSLLVAHDDNTISAKSWVSREALNVDALHEGGTFRHALWRRVQAVVTPFLAQLVSVVDRDCNLDLLLDRNSGEPLKKLWLEIFRDDKFLSVSPYTRTENNSATKTILVQNYMSVDRNKGCTMPFSWRIKDYLEDLWKHALQQEGHTVKQFEEFFWKTPLGRYISEATNEMQMEFFYRYLQDFISMTMNVTSEVDFEVLRGAFTSSVNEVRIAHEAHESEALSLVWIHVAYHHFKNRIQNLHRMMSLEPQISQMLLENRYASEGKELVLDVLAAVACIEYLEPQNLDGDDQSLAWLRRVKKLQVPVELVCSLESLHNRGDRCRQMVTNIQHGWRRIYSLVLFVEHMLLGVGDLQQKLKPVVLEHTQLLAQVLEQDSNLKKKKPFEAVITVLKTCKDKASQRIIRFGLQLCPVCMGDPRDPLSLPCDHIYCLTCIRQWLVPGQMHCPLCVQEVPDNFELKPSDELRRLISQNASFRMRCNAFFIDLVSTMCFKDNTPPSKDIILHLLSLLMVEASSLPPFKGRDRRFLTKALSPFDDSVDKNPVVRSVVLKLLLNYSFDHVKDYLQQHLTEVEQSKILEETDKAELYCLYMNCLEDSMYDRTQWHTVAEQQNCFLEETRFLLEFLQSDSVSAHTATVEHLQRLARVRLCLDMAADLLVANAGIHDDPSAFIQAFWNNVVNLCRQSRNDWYRVYLIRKLCSLQGVECVKNLLLQETYRWLFPQEILEMNQDDSQIDQYLACGADYKTIRDAVAKFMLDLHINGIQKAIEDCNCTPMKKAVYVLMAFFREVTSLHRTGNPNMHPKPEHCAGLEHFIKNSAIFVNNEMKAFAEKLVRNQLGALRVRPHMPSRDLSLVEVTIHMAAVLLCGNLLLLQPLQKLALSPNNMMASFIPTMPDDMLAVAQQAMGHLQWYFCPNGHPCTVGECGQPMEVSRCPDCDAEIGGSNHRPVDGFRAMQIQADRTQSGHILGDAQRRDLPDMQDTKNMSPAPFALLRLLTHMSMLIGTQNNPQSIMQIIKPAVVHPDAFLMQHLLKDMEQLSKALGKGVDDTVSTIHLAIHSLLEPHQTSQWPDPYDPNLSTKDARNGWENAMNNDVITHHLKVLEHQLKEVNAFIREDERVSSNPVMKLTFGEPGRFLRSLPQNSLIHNSSIWSCRNKVSLMSLTHIVEQNNGRDTLPVLWRFLQREAELRLVRFLPDILVLQRDLVKKFQNITDLTYKTIREFLQDQKAASLTAWYEKRIKIFLTTWNQIRVSLANTGEIKLPADYTEKDLGLDADLQVLLPQRRGLGLCSTALVSYLITIHNDLMYTVEKHTGDDSDYKISPAELTELHVIRYEYDRDLLPLVLANCQYSMECGQETLLEYDLPKIQQQILTRFLQGKPLITINGIPTLVNRQDRNYEIIFKDVKGKVQQELLQPLTQYDLVKELQSYSDVCEALSTVELAVGFLAMTGGEPNMQLGVYLKDVLQMTDHMATHVFKALSRCSLKHCVALWQLLSSLKSETMLRLKRDPFVGISKEYKQPLQEEHKRLLTSFFTKSSADAFLLEMHEFLLLVLKSPKATDTYRPDWRLKHTVVSYMERKDLDVPPEVEEFFPKEILLSEYTSTWNFSVNLRQKRSQS.

Composition is skewed to polar residues over residues 27-52 (SQSY…QITN) and 61-72 (ESKSLEIQNANV). The tract at residues 27 to 373 (SQSYETTQGT…KRNTRSTQHI (347 aa)) is disordered. The segment covering 85–101 (PKKKKRKKRKKEKKKKS) has biased composition (basic residues). Low complexity predominate over residues 108–118 (SSLTSDLSDIS). Residues 119 to 128 (LTDKEKKMDT) show a composition bias toward basic and acidic residues. 2 stretches are compositionally biased toward polar residues: residues 167-177 (LSASALTTGSS) and 184-195 (IGTTQKPVSASA). Residues 205 to 218 (QTKEEKVKCKDEGQ) show a composition bias toward basic and acidic residues. Residues 219-243 (KSLSAKAQHTPNANVDQNANVQSDA) show a composition bias toward polar residues. A compositionally biased stretch (low complexity) spans 256–269 (KSSSVKTKPSKSTV). 2 stretches are compositionally biased toward basic and acidic residues: residues 271 to 288 (DPKK…RDNE) and 330 to 352 (MKVE…SKES). ATP is bound by residues 2036–2041 (GVGKSL), Glu-2135, Asp-2193, Arg-2252, Lys-2535, and Ser-2610. Residues Cys-4005, Cys-4008, Cys-4020, His-4022, Cys-4025, Cys-4028, Cys-4040, Cys-4043, Cys-4507, and His-4511 each coordinate Zn(2+). The segment at 4005-4043 (CPVCMGDPRDPLSLPCDHIYCLTCIRQWLVPGQMHCPLC) adopts an RING-type zinc-finger fold. Residues 4487 to 4557 (MPDDMLAVAQ…MQIQADRTQS (71 aa)) form an RZ-type zinc finger. Catalysis depends on Cys-4518, which acts as the Nucleophile; for E3 ubiquitin-lipopolysaccharide ligase activity. Positions 4527 and 4530 each coordinate Zn(2+).

Belongs to the AAA ATPase family.

The protein resides in the cytoplasm. The protein localises to the cytosol. Its subcellular location is the lipid droplet. The enzyme catalyses S-ubiquitinyl-[E2 ubiquitin-conjugating enzyme]-L-cysteine + [acceptor protein]-L-lysine = [E2 ubiquitin-conjugating enzyme]-L-cysteine + N(6)-ubiquitinyl-[acceptor protein]-L-lysine.. It catalyses the reaction ATP + H2O = ADP + phosphate + H(+). The protein operates within protein modification; protein ubiquitination. Functionally, atypical E3 ubiquitin ligase that can catalyze ubiquitination of both proteins and lipids, and which is involved in various processes, such as lipid metabolism, angiogenesis and cell-autonomous immunity. Acts as a key immune sensor by catalyzing ubiquitination of the lipid A moiety of bacterial lipopolysaccharide (LPS) via its RZ-type zinc-finger: restricts the proliferation of cytosolic bacteria, such as Salmonella, by generating the bacterial ubiquitin coat through the ubiquitination of LPS. Ubiquitination of LPS triggers cell-autonomous immunity, such as antibacterial autophagy, leading to degradation of the microbial invader. Involved in lipid metabolism by regulating fat storage and lipid droplet formation; act by inhibiting the lipolytic process. Also regulates lipotoxicity by inhibiting desaturation of fatty acids. Also acts as an E3 ubiquitin-protein ligase via its RING-type zinc finger. Involved in the non-canonical Wnt signaling pathway in vascular development: acts by mediating ubiquitination and degradation of proteins downstream of rspo3, leading to inhibit the non-canonical Wnt signaling pathway and promoting vessel regression. Also has ATPase activity; ATPase activity is required for ubiquitination of LPS. Also involved in neuromuscular regulation. This chain is E3 ubiquitin-protein ligase rnf213-alpha, found in Danio rerio (Zebrafish).